The following is a 202-amino-acid chain: Small ribosomal subunit protein uS4 (202 aa).

The S4 RNA-binding domain occupies 94–157 (SRLDSLVYRA…LEIPLIKNTL (64 aa)).

It belongs to the universal ribosomal protein uS4 family. As to quaternary structure, part of the 30S ribosomal subunit. Contacts protein S5. The interaction surface between S4 and S5 is involved in control of translational fidelity.

Its function is as follows. One of the primary rRNA binding proteins, it binds directly to 16S rRNA where it nucleates assembly of the body of the 30S subunit. With S5 and S12 plays an important role in translational accuracy. This chain is Small ribosomal subunit protein uS4, found in Ureaplasma parvum serovar 3 (strain ATCC 27815 / 27 / NCTC 11736).